The primary structure comprises 644 residues: MSHLTLQLHVVIALYVLFRWCHGGITSINCSGDMWVEPGEIFQMGMNVSIYCQEALKHCRPRNLYFYKNGFKEEFDITRINRTTARIWYKGFSEPHAYMHCTAECPGHFQETLICGKDISSGHPPDAPSNLTCVIYEYSGNMTCTWNTGKPTYIDTKYIVHVKSLETEEEQQYLASSYVKISTDSLQGSRKYLVWVQAVNSLGMENSQQLHVHLDDIVIPSASIISRAETTNDTVPKTIVYWKSKTMIEKVFCEMRYKTTTNQTWSVKEFDANFTYVQQSEFYLEPDSKYVFQVRCQETGKRNWQPWSSPFVHQTSQETGKRNWQPWSSPFVHQTSQTVSQVTAKSSHEPQKMEMLSATIFRGHPASGNHQDIGLLSGMVFLAIMLPIFSLIGIFNRSLRIGIKRKVLLMIPKWLYEDIPNMENSNVAKLLQEKSVFENDNASEQALYVDPVLTEISEISPLEHKPTDYKEERLTGLLETRDCPLGMLSTSSSVVYIPDLNTGYKPQVSNVPPGGNLFINRDERDPTSLETTDDHFARLKTYPNFQFSASSMALLNKTLILDELCLVLNQGEFNSLDIKNSRQEETSIVLQSDSPSETIPAQTLLSDEFVSCLAIGNEDLPSINSYFPQNVLESHFSRISLFQK.

An N-terminal signal peptide occupies residues 1 to 23; sequence MSHLTLQLHVVIALYVLFRWCHG. Over 24–374 the chain is Extracellular; sequence GITSINCSGD…PASGNHQDIG (351 aa). Residues asparagine 47, asparagine 130, and asparagine 232 are each glycosylated (N-linked (GlcNAc...) asparagine). 2 Fibronectin type-III domains span residues 127–217 and 219–318; these read APSN…LDDI and IPSA…TSQE. A helical membrane pass occupies residues 375–395; it reads LLSGMVFLAIMLPIFSLIGIF. Over 396-644 the chain is Cytoplasmic; that stretch reads NRSLRIGIKR…HFSRISLFQK (249 aa).

Belongs to the type I cytokine receptor family. Type 2 subfamily. Heterodimer with IL12RB1. In presence of IL23, the heterodimer forms the IL23 receptor. Interacts with JAK2 and in presence of IL23 with STAT3. In terms of processing, phosphorylated in response to IL23. As to expression, expressed by Th1, Th2 and dendritic cells.

It localises to the cell membrane. In terms of biological role, associates with IL12RB1 to form the interleukin-23 receptor. Binds IL23 and mediates T-cells, NK cells and possibly certain macrophage/myeloid cells stimulation probably through activation of the Jak-Stat signaling cascade. IL23 functions in innate and adaptive immunity and may participate in acute response to infection in peripheral tissues. IL23 may be responsible for autoimmune inflammatory diseases and be important for tumorigenesis. This Mus musculus (Mouse) protein is Interleukin-23 receptor (Il23r).